Here is an 823-residue protein sequence, read N- to C-terminus: Putative ankyrin repeat domain-containing protein 20A2 (823 aa).

5 ANK repeats span residues Gln-66–Val-95, Glu-99–Leu-128, Tyr-132–Ala-161, Asp-165–Ala-194, and Leu-198–Ala-227. Disordered regions lie at residues Val-301–Asp-343 and Val-355–Asn-402. The span at Gln-372–Gln-384 shows a compositional bias: basic and acidic residues. 3 coiled-coil regions span residues Lys-431–Glu-480, Glu-565–Thr-724, and Leu-776–Glu-805.

In Homo sapiens (Human), this protein is Putative ankyrin repeat domain-containing protein 20A2.